A 75-amino-acid polypeptide reads, in one-letter code: Putative defensin-like protein 271 (75 aa).

Positions 1-23 (MTSMKLHIVALCIIVSFLVNVQS) are cleaved as a signal peptide. Disulfide bonds link Cys-33–Cys-72, Cys-39–Cys-61, Cys-45–Cys-70, and Cys-49–Cys-71.

This sequence belongs to the DEFL family.

The protein resides in the secreted. This is Putative defensin-like protein 271 from Arabidopsis thaliana (Mouse-ear cress).